The chain runs to 252 residues: Ribosomal RNA small subunit methyltransferase J (252 aa).

Residues 101-102 (RD), 117-118 (ER), 153-154 (SS), and aspartate 171 contribute to the S-adenosyl-L-methionine site.

It belongs to the methyltransferase superfamily. RsmJ family.

It localises to the cytoplasm. It carries out the reaction guanosine(1516) in 16S rRNA + S-adenosyl-L-methionine = N(2)-methylguanosine(1516) in 16S rRNA + S-adenosyl-L-homocysteine + H(+). Functionally, specifically methylates the guanosine in position 1516 of 16S rRNA. The sequence is that of Ribosomal RNA small subunit methyltransferase J from Salmonella heidelberg (strain SL476).